Reading from the N-terminus, the 429-residue chain is Small ribosomal subunit protein uS5m (429 aa).

The tract at residues 108–127 (AGAKKGRGKRTKKKKRKDLN) is disordered. Residues 111-125 (KKGRGKRTKKKKRKD) show a composition bias toward basic residues. Residues 218-282 (FDTRILEVRN…NRAVHHLYYI (65 aa)) form the S5 DRBM domain.

This sequence belongs to the universal ribosomal protein uS5 family. Component of the mitochondrial ribosome small subunit (28S) which comprises a 12S rRNA and about 30 distinct proteins.

The protein localises to the mitochondrion. The sequence is that of Small ribosomal subunit protein uS5m (MRPS5) from Pongo abelii (Sumatran orangutan).